The chain runs to 197 residues: Adenylate kinase (197 aa).

Position 16–21 (16–21) interacts with ATP; it reads GAGKGT. Residues 36–65 form an NMP region; sequence STGDILRDHVARGTALGQRVKPILDAGQLV. Residues threonine 37, arginine 42, 63–65, 90–93, and glutamine 97 contribute to the AMP site; these read QLV and GFPR. The LID stretch occupies residues 131–147; that stretch reads ERGRQAALRGEPVRSDD. Arginine 132 contributes to the ATP binding site. 2 residues coordinate AMP: arginine 144 and arginine 155. Residue glycine 183 coordinates ATP.

The protein belongs to the adenylate kinase family. Monomer.

The protein resides in the cytoplasm. The catalysed reaction is AMP + ATP = 2 ADP. It functions in the pathway purine metabolism; AMP biosynthesis via salvage pathway; AMP from ADP: step 1/1. Catalyzes the reversible transfer of the terminal phosphate group between ATP and AMP. Plays an important role in cellular energy homeostasis and in adenine nucleotide metabolism. This is Adenylate kinase from Deinococcus geothermalis (strain DSM 11300 / CIP 105573 / AG-3a).